The sequence spans 332 residues: MHNTDVLIIGAGPVGLFAIFQAGMLGMKCHVIDAQEVIGGQCITLYPEKPIYDIPAYPKIAAADLIKQLELQAAPFNPVYHLNQQAVELKKEGEFFEVKTSKDIVIKSKVIVIAAGAGSFGPNKPPLANIEEFENESVFYFINNRSKFTGKNIVIAGGGDSAVDWAISLSEIANKIYLVHRRDKFRAANESLRQLKDIAESGKIELVTGYQLDSLEGNNSELQSVIVRDLQNNTRKLNVNILLPFFGLKQELGNLVNWDLDIKLHHIEVDPVYYQTNISGIYAIGDVAHYSGKLKLILTGFAEAASSLHHAYGKVFDGNALHFEYSTTKYTQ.

FAD contacts are provided by Asp-33, Gln-41, Tyr-46, Ala-86, Phe-120, Asp-286, and Thr-327.

The protein belongs to the ferredoxin--NADP reductase type 2 family. As to quaternary structure, homodimer. Requires FAD as cofactor.

The catalysed reaction is 2 reduced [2Fe-2S]-[ferredoxin] + NADP(+) + H(+) = 2 oxidized [2Fe-2S]-[ferredoxin] + NADPH. The chain is Ferredoxin--NADP reductase from Rickettsia bellii (strain OSU 85-389).